The sequence spans 364 residues: Probable dual-specificity RNA methyltransferase RlmN (364 aa).

The Proton acceptor role is filled by Glu107. In terms of domain architecture, Radical SAM core spans 113–346 (HEYGNSVCVT…ATIRREQGSD (234 aa)). Cys120 and Cys351 are joined by a disulfide. Residues Cys127, Cys131, and Cys134 each contribute to the [4Fe-4S] cluster site. S-adenosyl-L-methionine contacts are provided by residues 177 to 178 (GE), Ser209, 232 to 234 (SLH), and Asn308. The active-site S-methylcysteine intermediate is Cys351.

The protein belongs to the radical SAM superfamily. RlmN family. [4Fe-4S] cluster is required as a cofactor.

It localises to the cytoplasm. It catalyses the reaction adenosine(2503) in 23S rRNA + 2 reduced [2Fe-2S]-[ferredoxin] + 2 S-adenosyl-L-methionine = 2-methyladenosine(2503) in 23S rRNA + 5'-deoxyadenosine + L-methionine + 2 oxidized [2Fe-2S]-[ferredoxin] + S-adenosyl-L-homocysteine. The enzyme catalyses adenosine(37) in tRNA + 2 reduced [2Fe-2S]-[ferredoxin] + 2 S-adenosyl-L-methionine = 2-methyladenosine(37) in tRNA + 5'-deoxyadenosine + L-methionine + 2 oxidized [2Fe-2S]-[ferredoxin] + S-adenosyl-L-homocysteine. Specifically methylates position 2 of adenine 2503 in 23S rRNA and position 2 of adenine 37 in tRNAs. Confers resistance to some classes of antibiotics. This Staphylococcus carnosus (strain TM300) protein is Probable dual-specificity RNA methyltransferase RlmN.